The primary structure comprises 118 residues: Putative pterin-4-alpha-carbinolamine dehydratase (118 aa).

Belongs to the pterin-4-alpha-carbinolamine dehydratase family.

The catalysed reaction is (4aS,6R)-4a-hydroxy-L-erythro-5,6,7,8-tetrahydrobiopterin = (6R)-L-erythro-6,7-dihydrobiopterin + H2O. The chain is Putative pterin-4-alpha-carbinolamine dehydratase from Pseudomonas putida (strain GB-1).